The primary structure comprises 231 residues: 2-hydroxy-3-keto-5-methylthiopentenyl-1-phosphate phosphatase (231 aa).

It belongs to the HAD-like hydrolase superfamily. MtnX family.

The enzyme catalyses 2-hydroxy-5-methylsulfanyl-3-oxopent-1-enyl phosphate + H2O = 1,2-dihydroxy-5-(methylsulfanyl)pent-1-en-3-one + phosphate. It participates in amino-acid biosynthesis; L-methionine biosynthesis via salvage pathway; L-methionine from S-methyl-5-thio-alpha-D-ribose 1-phosphate: step 4/6. In terms of biological role, dephosphorylates 2-hydroxy-3-keto-5-methylthiopentenyl-1-phosphate (HK-MTPenyl-1-P) yielding 1,2-dihydroxy-3-keto-5-methylthiopentene (DHK-MTPene). The protein is 2-hydroxy-3-keto-5-methylthiopentenyl-1-phosphate phosphatase of Bacillus pumilus (strain SAFR-032).